The following is a 315-amino-acid chain: L-lactate dehydrogenase (315 aa).

Val-12, Asp-33, and Tyr-65 together coordinate NAD(+). Substrate is bound by residues Gln-82, Arg-88, and 120-123 (NPVD). NAD(+) contacts are provided by residues 118–120 (ISN) and Ser-143. Position 148-151 (148-151 (DTSR)) interacts with substrate. Arg-153 and His-168 together coordinate beta-D-fructose 1,6-bisphosphate. The Proton acceptor role is filled by His-175. Position 219 is a phosphotyrosine (Tyr-219). Thr-228 provides a ligand contact to substrate.

This sequence belongs to the LDH/MDH superfamily. LDH family. As to quaternary structure, homotetramer.

It is found in the cytoplasm. The enzyme catalyses (S)-lactate + NAD(+) = pyruvate + NADH + H(+). The protein operates within fermentation; pyruvate fermentation to lactate; (S)-lactate from pyruvate: step 1/1. Allosterically activated by fructose 1,6-bisphosphate (FBP). In terms of biological role, catalyzes the conversion of lactate to pyruvate. The protein is L-lactate dehydrogenase of Mycoplasmopsis pulmonis (strain UAB CTIP) (Mycoplasma pulmonis).